The following is a 708-amino-acid chain: Lactotransferrin (708 aa).

Residues 1–19 form the signal peptide; it reads MKLFFPALLSLGALGLCLA. 2 consecutive Transferrin-like domains span residues 25-352 and 364-693; these read VRWC…GLRE and VVWC…KLRR. 2 disulfide bridges follow: Cys-28-Cys-64 and Cys-38-Cys-55. The segment at 44 to 51 is interaction with E.coli ompC; the sequence is RMKKVRGP. Asp-79 lines the Fe(3+) pocket. Lys-92 is an active-site residue. Tyr-111 provides a ligand contact to Fe(3+). Disulfide bonds link Cys-134-Cys-217, Cys-176-Cys-192, Cys-179-Cys-202, Cys-189-Cys-200, and Cys-250-Cys-264. Residues Thr-136, Arg-140, Ala-142, and Gly-143 each contribute to the hydrogencarbonate site. A Fe(3+)-binding site is contributed by Tyr-211. Asn-252 carries N-linked (GlcNAc...) asparagine glycosylation. His-272 lines the Fe(3+) pocket. Ser-278 acts as the Nucleophile in catalysis. Disulfide bonds link Cys-367-Cys-399 and Cys-377-Cys-390. The N-linked (GlcNAc...) asparagine glycan is linked to Asn-385. 2 residues coordinate Fe(3+): Asp-414 and Tyr-452. Cystine bridges form between Cys-424–Cys-703, Cys-444–Cys-666, Cys-476–Cys-551, Cys-500–Cys-694, Cys-510–Cys-524, Cys-521–Cys-534, Cys-592–Cys-606, and Cys-644–Cys-649. Residues Thr-478, Arg-482, Ala-484, and Gly-485 each contribute to the hydrogencarbonate site. Residue Asn-537 is glycosylated (N-linked (GlcNAc...) asparagine). Tyr-545 is a binding site for Fe(3+). Asn-594 carries an N-linked (GlcNAc...) asparagine glycan. A Fe(3+)-binding site is contributed by His-614.

Belongs to the transferrin family. In terms of assembly, monomer. Found in a complex with LTF, CLU, EPPIN and SEMG1. Interacts with E.coli outer membrane protein C (OmpC). Found in a complex with MPO and LTF; interacts directly with CP, allows Fe(3+) incorporation into LTF and activation of CP ferroxidase activity. Post-translationally, poly-N-acetyllactosaminic carbohydrate moiety seems to be needed for TLR4 activation.

It is found in the secreted. Its subcellular location is the cytoplasmic granule. Its function is as follows. Transferrins are iron binding transport proteins which can bind two Fe(3+) ions in association with the binding of an anion, usually bicarbonate. In terms of biological role, major iron-binding and multifunctional protein found in exocrine fluids such as breast milk and mucosal secretions. Has antimicrobial activity, which depends on the extracellular cation concentration. Antimicrobial properties include bacteriostasis, which is related to its ability to sequester free iron and thus inhibit microbial growth, as well as direct bactericidal properties leading to the release of lipopolysaccharides from the bacterial outer membrane. Can also prevent bacterial biofilm development in P.aeruginosa infection. Has weak antifungal activity against C.albicans. Has anabolic, differentiating and anti-apoptotic effects on osteoblasts and can also inhibit osteoclastogenesis, possibly playing a role in the regulation of bone growth. Promotes binding of species C adenoviruses to epithelial cells, promoting adenovirus infection. Can inhibit papillomavirus infections. Stimulates the TLR4 signaling pathway leading to NF-kappa-B activation and subsequent pro-inflammatory cytokine production while also interfering with the lipopolysaccharide (LPS)-stimulated TLR4 signaling. Inhibits neutrophil granulocyte migration to sites of apoptosis, when secreted by apoptotic cells. Stimulates VEGFA-mediated endothelial cell migration and proliferation. Binds heparin, chondroitin sulfate and possibly other glycosaminoglycans (GAGs). Also binds specifically to pneumococcal surface protein A (PspA), the lipid A portion of bacterial lipopolysaccharide (LPS), lysozyme and DNA. Functionally, lactoferricin binds to the bacterial surface and is crucial for the bactericidal functions. Has some antiviral activity against papillomavirus infection. N-terminal region shows strong antifungal activity against C.albicans. Contains two BBXB heparin-binding consensus sequences that appear to form the predominate functional GAG-binding site. The lactotransferrin transferrin-like domain 1 functions as a serine protease of the peptidase S60 family that cuts arginine rich regions. This function contributes to the antimicrobial activity. Shows a preferential cleavage at -Arg-Ser-Arg-Arg-|- and -Arg-Arg-Ser-Arg-|-, and of Z-Phe-Arg-|-aminomethylcoumarin sites. The protein is Lactotransferrin (LTF) of Camelus dromedarius (Dromedary).